A 198-amino-acid polypeptide reads, in one-letter code: Probable nicotinate-nucleotide adenylyltransferase (198 aa).

This sequence belongs to the NadD family.

The enzyme catalyses nicotinate beta-D-ribonucleotide + ATP + H(+) = deamido-NAD(+) + diphosphate. Its pathway is cofactor biosynthesis; NAD(+) biosynthesis; deamido-NAD(+) from nicotinate D-ribonucleotide: step 1/1. In terms of biological role, catalyzes the reversible adenylation of nicotinate mononucleotide (NaMN) to nicotinic acid adenine dinucleotide (NaAD). This Herpetosiphon aurantiacus (strain ATCC 23779 / DSM 785 / 114-95) protein is Probable nicotinate-nucleotide adenylyltransferase.